The primary structure comprises 87 residues: Phosphoribosyl-ATP pyrophosphatase (87 aa).

Belongs to the PRA-PH family.

The protein localises to the cytoplasm. It catalyses the reaction 1-(5-phospho-beta-D-ribosyl)-ATP + H2O = 1-(5-phospho-beta-D-ribosyl)-5'-AMP + diphosphate + H(+). It participates in amino-acid biosynthesis; L-histidine biosynthesis; L-histidine from 5-phospho-alpha-D-ribose 1-diphosphate: step 2/9. In Paenarthrobacter aurescens (strain TC1), this protein is Phosphoribosyl-ATP pyrophosphatase.